The sequence spans 245 residues: Eukaryotic translation initiation factor 6 (245 aa).

Phosphoserine; by CK1 is present on residues serine 174 and serine 175.

The protein belongs to the eIF-6 family. Monomer. Associates with the 60S ribosomal subunit. Post-translationally, phosphorylation at Ser-174 and Ser-175 promotes nuclear export.

It localises to the cytoplasm. The protein localises to the nucleus. The protein resides in the nucleolus. Binds to the 60S ribosomal subunit and prevents its association with the 40S ribosomal subunit to form the 80S initiation complex in the cytoplasm. Is also involved in ribosome biogenesis. Associates with pre-60S subunits in the nucleus and is involved in its nuclear export. This is Eukaryotic translation initiation factor 6 from Candida albicans (strain SC5314 / ATCC MYA-2876) (Yeast).